Here is a 159-residue protein sequence, read N- to C-terminus: NADH-quinone oxidoreductase subunit B (159 aa).

4 residues coordinate [4Fe-4S] cluster: Cys-37, Cys-38, Cys-102, and Cys-132.

It belongs to the complex I 20 kDa subunit family. As to quaternary structure, NDH-1 is composed of 14 different subunits. Subunits NuoB, C, D, E, F, and G constitute the peripheral sector of the complex. [4Fe-4S] cluster is required as a cofactor.

It localises to the cell inner membrane. It catalyses the reaction a quinone + NADH + 5 H(+)(in) = a quinol + NAD(+) + 4 H(+)(out). Functionally, NDH-1 shuttles electrons from NADH, via FMN and iron-sulfur (Fe-S) centers, to quinones in the respiratory chain. Couples the redox reaction to proton translocation (for every two electrons transferred, four hydrogen ions are translocated across the cytoplasmic membrane), and thus conserves the redox energy in a proton gradient. The chain is NADH-quinone oxidoreductase subunit B from Ruthia magnifica subsp. Calyptogena magnifica.